We begin with the raw amino-acid sequence, 410 residues long: Kynureninase (410 aa).

Residues Thr-108, Ser-109, 135 to 138 (FPTD), Thr-176, Asp-205, His-208, and Tyr-230 each bind pyridoxal 5'-phosphate. Lys-231 carries the N6-(pyridoxal phosphate)lysine modification. Trp-260 and Thr-286 together coordinate pyridoxal 5'-phosphate.

It belongs to the kynureninase family. As to quaternary structure, homodimer. Requires pyridoxal 5'-phosphate as cofactor.

It catalyses the reaction L-kynurenine + H2O = anthranilate + L-alanine + H(+). The enzyme catalyses 3-hydroxy-L-kynurenine + H2O = 3-hydroxyanthranilate + L-alanine + H(+). Its pathway is amino-acid degradation; L-kynurenine degradation; L-alanine and anthranilate from L-kynurenine: step 1/1. It functions in the pathway cofactor biosynthesis; NAD(+) biosynthesis; quinolinate from L-kynurenine: step 2/3. Functionally, catalyzes the cleavage of L-kynurenine (L-Kyn) and L-3-hydroxykynurenine (L-3OHKyn) into anthranilic acid (AA) and 3-hydroxyanthranilic acid (3-OHAA), respectively. The polypeptide is Kynureninase (Deinococcus radiodurans (strain ATCC 13939 / DSM 20539 / JCM 16871 / CCUG 27074 / LMG 4051 / NBRC 15346 / NCIMB 9279 / VKM B-1422 / R1)).